Reading from the N-terminus, the 146-residue chain is Envelope protein OPG155 (146 aa).

A helical; Signal-anchor for type II membrane protein transmembrane segment spans residues 1 to 21 (MNSLSIFFIVVATAAVCLLFI). At 22–146 (QGYSIYENYG…AECQFLKSVL (125 aa)) the chain is on the virion surface side.

This sequence belongs to the orthopoxvirus OPG155 protein family. As to quaternary structure, part of a stable entry-fusion complex (EFC) which is at least composed of proteins OPG143, OPG147, OPG155, OPG086, OPG094, OPG107, OPG104, and OPG099. Formation of the viral membrane is necessary for the assembly of the complex. Interacts directly with protein OPG107. Post-translationally, contains two intramolecular disulfide bonds. They are created by the viral disulfide bond formation pathway, a poxvirus-specific pathway that operates on the cytoplasmic side of the MV membranes.

It is found in the virion membrane. In terms of biological role, envelope protein required for virus entry into host cell and for cell-cell fusion (syncytium formation). This Bos taurus (Bovine) protein is Envelope protein OPG155 (OPG155).